Reading from the N-terminus, the 130-residue chain is MNSKVGNKNNKRAAGSIGEAAAVQFLKENNYEILETNFRYRRLGEIDIISREKDYICFVEVKARSSLGYGYPREAVNIRKQENIRRLAQIYLCKNRINDLKVRFDVVEVYMEKKGDDIEVKEISLIKNAF.

This sequence belongs to the UPF0102 family.

In Acetivibrio thermocellus (strain ATCC 27405 / DSM 1237 / JCM 9322 / NBRC 103400 / NCIMB 10682 / NRRL B-4536 / VPI 7372) (Clostridium thermocellum), this protein is UPF0102 protein Cthe_0758.